The primary structure comprises 421 residues: D-inositol 3-phosphate glycosyltransferase (421 aa).

1D-myo-inositol 3-phosphate is bound at residue His9. Residues 15-16 (QP) and Gly23 contribute to the UDP-N-acetyl-alpha-D-glucosamine site. 1D-myo-inositol 3-phosphate is bound by residues 20–25 (DAGGMN), Lys78, Tyr110, Thr134, and Arg154. UDP-N-acetyl-alpha-D-glucosamine contacts are provided by Arg231, Lys236, and Arg294. Residues Tyr303, Gln304, and Ala306 each coordinate Mg(2+). UDP-N-acetyl-alpha-D-glucosamine contacts are provided by Glu316 and Glu324. Residue Thr330 coordinates Mg(2+).

Belongs to the glycosyltransferase group 1 family. MshA subfamily. As to quaternary structure, homodimer.

The catalysed reaction is 1D-myo-inositol 3-phosphate + UDP-N-acetyl-alpha-D-glucosamine = 1D-myo-inositol 2-acetamido-2-deoxy-alpha-D-glucopyranoside 3-phosphate + UDP + H(+). Its function is as follows. Catalyzes the transfer of a N-acetyl-glucosamine moiety to 1D-myo-inositol 3-phosphate to produce 1D-myo-inositol 2-acetamido-2-deoxy-glucopyranoside 3-phosphate in the mycothiol biosynthesis pathway. The polypeptide is D-inositol 3-phosphate glycosyltransferase (Corynebacterium aurimucosum (strain ATCC 700975 / DSM 44827 / CIP 107346 / CN-1) (Corynebacterium nigricans)).